The sequence spans 141 residues: Acetyltransferase YpeA (141 aa).

The region spanning 1–141 (MEIRVFRQED…GKRLIEDEEY (141 aa)) is the N-acetyltransferase domain.

It belongs to the acetyltransferase family. YpeA subfamily.

In Shigella boydii serotype 4 (strain Sb227), this protein is Acetyltransferase YpeA.